We begin with the raw amino-acid sequence, 343 residues long: Aspartate beta-hydroxylase domain-containing protein 2 (343 aa).

Topologically, residues 1–31 (MWLEWLVAWSWSLDGLRDCIATGIQSVRDCD) are cytoplasmic. A helical transmembrane segment spans residues 32–52 (GTAVITVACLLILFVWYCYHV). At 53 to 343 (GREQPRPHVS…ALDFIFAPGR (291 aa)) the chain is on the lumenal side. 2 N-linked (GlcNAc...) asparagine glycosylation sites follow: Asn-77 and Asn-185. Residues Trp-202 and Ser-246 each coordinate 2-oxoglutarate. Residue His-257 participates in Fe cation binding. 266–268 (RCH) is a binding site for 2-oxoglutarate. His-302 serves as a coordination point for Fe cation. Arg-315 is a 2-oxoglutarate binding site.

This sequence belongs to the aspartyl/asparaginyl beta-hydroxylase family. Requires Fe cation as cofactor.

The protein resides in the membrane. In terms of biological role, may function as 2-oxoglutarate-dependent dioxygenase. The sequence is that of Aspartate beta-hydroxylase domain-containing protein 2 (Asphd2) from Mus musculus (Mouse).